We begin with the raw amino-acid sequence, 145 residues long: NADH dehydrogenase [ubiquinone] 1 alpha subcomplex subunit 12 (145 aa).

At Met-1 the chain carries N-acetylmethionine.

This sequence belongs to the complex I NDUFA12 subunit family. As to quaternary structure, complex I is composed of 45 different subunits.

Its subcellular location is the mitochondrion inner membrane. Its function is as follows. Accessory subunit of the mitochondrial membrane respiratory chain NADH dehydrogenase (Complex I), that is believed not to be involved in catalysis. Complex I functions in the transfer of electrons from NADH to the respiratory chain. The immediate electron acceptor for the enzyme is believed to be ubiquinone. This chain is NADH dehydrogenase [ubiquinone] 1 alpha subcomplex subunit 12 (Ndufa12), found in Mus musculus (Mouse).